The primary structure comprises 350 residues: Nicotinate-nucleotide--dimethylbenzimidazole phosphoribosyltransferase (350 aa).

Catalysis depends on E317, which acts as the Proton acceptor.

Belongs to the CobT family.

The enzyme catalyses 5,6-dimethylbenzimidazole + nicotinate beta-D-ribonucleotide = alpha-ribazole 5'-phosphate + nicotinate + H(+). It functions in the pathway nucleoside biosynthesis; alpha-ribazole biosynthesis; alpha-ribazole from 5,6-dimethylbenzimidazole: step 1/2. In terms of biological role, catalyzes the synthesis of alpha-ribazole-5'-phosphate from nicotinate mononucleotide (NAMN) and 5,6-dimethylbenzimidazole (DMB). This Shewanella putrefaciens (strain CN-32 / ATCC BAA-453) protein is Nicotinate-nucleotide--dimethylbenzimidazole phosphoribosyltransferase.